A 370-amino-acid chain; its full sequence is Anthranilate phosphoribosyltransferase (370 aa).

5-phospho-alpha-D-ribose 1-diphosphate is bound by residues Gly-82, 85–86 (GD), Thr-90, 92–95 (NVST), 110–118 (KHGNRAATS), and Ser-122. Residue Gly-82 participates in anthranilate binding. Ser-94 provides a ligand contact to Mg(2+). An anthranilate-binding site is contributed by Asn-113. Arg-168 lines the anthranilate pocket. Mg(2+)-binding residues include Asp-226 and Glu-227.

Belongs to the anthranilate phosphoribosyltransferase family. Homodimer. The cofactor is Mg(2+).

It catalyses the reaction N-(5-phospho-beta-D-ribosyl)anthranilate + diphosphate = 5-phospho-alpha-D-ribose 1-diphosphate + anthranilate. Its pathway is amino-acid biosynthesis; L-tryptophan biosynthesis; L-tryptophan from chorismate: step 2/5. Functionally, catalyzes the transfer of the phosphoribosyl group of 5-phosphorylribose-1-pyrophosphate (PRPP) to anthranilate to yield N-(5'-phosphoribosyl)-anthranilate (PRA). The protein is Anthranilate phosphoribosyltransferase of Methanosarcina mazei (strain ATCC BAA-159 / DSM 3647 / Goe1 / Go1 / JCM 11833 / OCM 88) (Methanosarcina frisia).